The primary structure comprises 653 residues: Biotin biosynthesis bifunctional protein BioWF (653 aa).

R278 provides a ligand contact to substrate. A pyridoxal 5'-phosphate-binding site is contributed by 365–366; the sequence is GY. H390 contributes to the substrate binding site. Residues S436, 461 to 464, and 492 to 495 each bind pyridoxal 5'-phosphate; these read DDAH and TASK. Position 495 is an N6-(pyridoxal phosphate)lysine (K495).

The protein in the N-terminal section; belongs to the BioW family. It in the C-terminal section; belongs to the class-II pyridoxal-phosphate-dependent aminotransferase family. BioF subfamily. In terms of assembly, homodimer. Mg(2+) serves as cofactor. Pyridoxal 5'-phosphate is required as a cofactor.

The catalysed reaction is heptanedioate + ATP + CoA = 6-carboxyhexanoyl-CoA + AMP + diphosphate. The enzyme catalyses 6-carboxyhexanoyl-[ACP] + L-alanine + H(+) = (8S)-8-amino-7-oxononanoate + holo-[ACP] + CO2. The protein operates within metabolic intermediate metabolism; pimeloyl-CoA biosynthesis; pimeloyl-CoA from pimelate: step 1/1. It functions in the pathway cofactor biosynthesis; biotin biosynthesis. Its function is as follows. Catalyzes both the decarboxylative condensation of pimeloyl-[acyl-carrier protein] and L-alanine to produce 8-amino-7-oxononanoate (AON), [acyl-carrier protein], and carbon dioxide, and the transformation of pimelate into pimeloyl-CoA with concomitant hydrolysis of ATP to AMP. The protein is Biotin biosynthesis bifunctional protein BioWF of Cutibacterium acnes (strain DSM 16379 / KPA171202) (Propionibacterium acnes).